The following is a 45-amino-acid chain: Large ribosomal subunit protein bL36 (45 aa).

The segment at methionine 1–lysine 45 is disordered.

This sequence belongs to the bacterial ribosomal protein bL36 family.

This is Large ribosomal subunit protein bL36 from Chlamydia trachomatis serovar L2 (strain ATCC VR-902B / DSM 19102 / 434/Bu).